Consider the following 411-residue polypeptide: Efflux pump periplasmic linker BepF (411 aa).

The stretch at 118–196 (FVLQKDALQA…SLEQAQINLG (79 aa)) forms a coiled coil.

The protein belongs to the membrane fusion protein (MFP) (TC 8.A.1) family. Probably part of a tripartite efflux pump, which is composed of an outer membrane efflux protein, an inner membrane protein and a protein that expands the periplasmic space. Could form a tripartite pump with BepC and BepG.

Its subcellular location is the periplasm. Functionally, may contribute to resistance to some drugs, such as deoxycholate, sodium dodecyl sulfate and nalidixic acid, in the absence of BepD and BepE. The protein is Efflux pump periplasmic linker BepF (bepF) of Brucella suis biovar 1 (strain 1330).